The chain runs to 354 residues: Probable L-ascorbate-6-phosphate lactonase UlaG (354 aa).

This sequence belongs to the UlaG family. It depends on a divalent metal cation as a cofactor.

Its subcellular location is the cytoplasm. It carries out the reaction L-ascorbate 6-phosphate + H2O = 3-dehydro-L-gulonate 6-phosphate. The protein operates within cofactor degradation; L-ascorbate degradation; D-xylulose 5-phosphate from L-ascorbate: step 1/4. Probably catalyzes the hydrolysis of L-ascorbate-6-P into 3-keto-L-gulonate-6-P. Is essential for L-ascorbate utilization under anaerobic conditions. This is Probable L-ascorbate-6-phosphate lactonase UlaG from Shigella boydii serotype 18 (strain CDC 3083-94 / BS512).